The following is a 751-amino-acid chain: Photosystem I P700 chlorophyll a apoprotein A1 (751 aa).

Helical transmembrane passes span 72-95 (IFSA…FHGA), 158-181 (LYCT…FHYH), 197-221 (MNHH…HVSL), 293-311 (TAHH…GHMY), 348-371 (WHAQ…HHMY), 387-413 (LSLF…IFMV), 435-457 (AIIS…LYVH), and 532-550 (FLVH…LILL). The [4Fe-4S] cluster site is built by C574 and C583. 2 consecutive transmembrane segments (helical) span residues 590 to 611 (HVFL…HFSW) and 665 to 687 (LSAY…MFLF). H676 lines the chlorophyll a' pocket. 2 residues coordinate chlorophyll a: M684 and Y692. Residue W693 coordinates phylloquinone. The helical transmembrane segment at 725 to 745 (AVGVTHYLLGGIVTTWAFFLA) threads the bilayer.

This sequence belongs to the PsaA/PsaB family. As to quaternary structure, the PsaA/B heterodimer binds the P700 chlorophyll special pair and subsequent electron acceptors. PSI consists of a core antenna complex that captures photons, and an electron transfer chain that converts photonic excitation into a charge separation. The cyanobacterial PSI reaction center is composed of one copy each of PsaA,B,C,D,E,F,I,J,K,L,M and X, and forms trimeric complexes. The cofactor is PSI electron transfer chain: 5 chlorophyll a, 1 chlorophyll a', 2 phylloquinones and 3 4Fe-4S clusters. PSI core antenna: 90 chlorophyll a, 22 carotenoids, 3 phospholipids and 1 galactolipid. P700 is a chlorophyll a/chlorophyll a' dimer, A0 is one or more chlorophyll a, A1 is one or both phylloquinones and FX is a shared 4Fe-4S iron-sulfur center..

It localises to the cellular thylakoid membrane. It carries out the reaction reduced [plastocyanin] + hnu + oxidized [2Fe-2S]-[ferredoxin] = oxidized [plastocyanin] + reduced [2Fe-2S]-[ferredoxin]. Functionally, psaA and PsaB bind P700, the primary electron donor of photosystem I (PSI), as well as the electron acceptors A0, A1 and FX. PSI is a plastocyanin/cytochrome c6-ferredoxin oxidoreductase, converting photonic excitation into a charge separation, which transfers an electron from the donor P700 chlorophyll pair to the spectroscopically characterized acceptors A0, A1, FX, FA and FB in turn. Oxidized P700 is reduced on the lumenal side of the thylakoid membrane by plastocyanin or cytochrome c6. The polypeptide is Photosystem I P700 chlorophyll a apoprotein A1 (Gloeothece citriformis (strain PCC 7424) (Cyanothece sp. (strain PCC 7424))).